The following is a 204-amino-acid chain: MMPSCNRSCSCSRGPSVEDGKWYGVRSYLHLFYEDCAGTALSDDPEGPPVLCPRRPWPSLCWKISLSSGTLLLLLGVAALTTGYAVPPKLEGIGEGEFLVLDQRAADYNQALGTCRLAGTALCVAAGVLLAICLFWAMIGWLSQDTKAEPLDPEADSHVEVFGDEPEQQLSPIFRNASGQSWFSPPASPFGQSSVQTIQPKRDS.

2 consecutive transmembrane segments (helical) span residues 66 to 86 and 122 to 142; these read LSSG…GYAV and LCVA…IGWL. Residues 178 to 204 form a disordered region; sequence SGQSWFSPPASPFGQSSVQTIQPKRDS. Residues 190-204 are compositionally biased toward polar residues; that stretch reads FGQSSVQTIQPKRDS.

This sequence belongs to the VMP family.

The protein localises to the membrane. Functionally, may play a role in maintenance and/or transport of vesicles. In Homo sapiens (Human), this protein is Neurensin-2 (NRSN2).